The following is a 117-amino-acid chain: Ig heavy chain V region 5-76 (117 aa).

The first 19 residues, 1 to 19, serve as a signal peptide directing secretion; that stretch reads MNFVLSLIFLALILKGVQC. A framework-1 region spans residues 20-49; it reads EVHLVESGGGLVKPGGSLKLSCVVSGFTFN. A disulfide bridge links cysteine 41 with cysteine 115. Residues 50-54 form a complementarity-determining-1 region; sequence KYAMS. The interval 55–68 is framework-2; sequence WVRQTPEKRLEWVA. Residues 69–85 are complementarity-determining-2; that stretch reads TISSGGLYTYYPDSVKG. Residues 86–117 are framework-3; it reads RFTISRDNAGNTLYLQMSSLRSEDTAMYYCAR.

The chain is Ig heavy chain V region 5-76 from Mus musculus (Mouse).